Reading from the N-terminus, the 75-residue chain is Exodeoxyribonuclease 7 small subunit (75 aa).

Belongs to the XseB family. As to quaternary structure, heterooligomer composed of large and small subunits.

The protein resides in the cytoplasm. It carries out the reaction Exonucleolytic cleavage in either 5'- to 3'- or 3'- to 5'-direction to yield nucleoside 5'-phosphates.. In terms of biological role, bidirectionally degrades single-stranded DNA into large acid-insoluble oligonucleotides, which are then degraded further into small acid-soluble oligonucleotides. The sequence is that of Exodeoxyribonuclease 7 small subunit from Nostoc punctiforme (strain ATCC 29133 / PCC 73102).